The chain runs to 425 residues: MMGKLPLGVVSPYVKMSSGGCSDPLKFYATSYCTAYGREEFKPRMGSHVGTGYKSNYRPLVSYQPHLDTLDNPAVGEQIHDTSKSVASQSYAPLEVPDGKQPLPWNLHQTTSGYGREKVNIGPLSKEVRKVHFDTQDHGPQTITGLEPKEVPLIHQQQGKGSTEWENSRYGPRFMTSEYNSKYLKESPNHPDLLLKKTIGSKEETGFTEESTKNPIVFQPPSQAYPGDPVLHPGRSITKSDYLPISHPQGNEFLPVLARGSDRDTGYSRVSERSLNPRMPTPSSQPTSMSHRSYQPPQRMQQSNVALLGRESVGNKEPTGFTLNNPSYVRSSYEQDRDQRYLTTYNQGYFENIPKGLDREGWTRGGIQPQKAGAYALSEPVTHMDTTPNPTETLRHLHPHVGRTLTSVDPFYRDVPHSNRYPTSS.

2 disordered regions span residues 259–297 (RGSDRDTGYSRVSERSLNPRMPTPSSQPTSMSHRSYQPP) and 315–335 (NKEPTGFTLNNPSYVRSSYEQ). The span at 260-272 (GSDRDTGYSRVSE) shows a compositional bias: basic and acidic residues. The segment covering 277–290 (PRMPTPSSQPTSMS) has biased composition (low complexity). Polar residues predominate over residues 321-332 (FTLNNPSYVRSS).

In terms of assembly, microtubule inner protein component of sperm flagellar doublet microtubules. Interacts with PPP1CA. As to expression, expressed in brain, ovaries and testis. Expressed in the tracheal epithelium and in secondary spermatocytes and spermatids present in the seminiferous tubule. Expressed in ependymal cells lining the ventricular walls of the brain.

It is found in the cell projection. The protein localises to the cilium. Its subcellular location is the cytoplasm. The protein resides in the cytoskeleton. It localises to the flagellum axoneme. The sequence is that of Stabilizer of axonemal microtubules 4 from Rattus norvegicus (Rat).